A 108-amino-acid polypeptide reads, in one-letter code: uncharacterized protein (108 aa).

The interval 75–94 (TPQVSSFPSSTTSLSHSCTT) is disordered. Over residues 79 to 94 (SSFPSSTTSLSHSCTT) the composition is skewed to low complexity.

This is an uncharacterized protein from Homo sapiens (Human).